The chain runs to 273 residues: Oligodendrocyte transcription factor 3 (273 aa).

The span at 1–14 (MNSDSSSVSSRASS) shows a compositional bias: low complexity. The interval 1–72 (MNSDSSSVSS…KAAGESSKYK (72 aa)) is disordered. Over residues 24–34 (DHHHRHHHHHQ) the composition is skewed to basic residues. Residues 37 to 47 (RLNSVSSTQGD) show a composition bias toward polar residues. The stretch at 69 to 90 (SKYKIKKQLSEQDLQQLRLKIN) forms a coiled coil. Residues 84 to 138 (QLRLKINGRERKRMHDLNLAMDGLREVMPYAHGPSVRKLSKIATLLLARNYILML) enclose the bHLH domain.

In terms of tissue distribution, weakly expressed, mainly in non-neural tissues.

Its subcellular location is the nucleus. Its function is as follows. May determine the distinct specification program of class A neurons in the dorsal part of the spinal cord and suppress specification of class B neurons. This chain is Oligodendrocyte transcription factor 3 (Olig3), found in Mus musculus (Mouse).